The sequence spans 82 residues: Myosin light chain alkali (82 aa).

The EF-hand domain maps to 7–42 (GCYEDFIECLKLYDKEENGTMMLAELQHALLALGES).

In terms of assembly, myosin is a hexamer of 2 heavy chains and 4 light chains.

This is Myosin light chain alkali (Mlc1) from Drosophila mauritiana (Fruit fly).